A 252-amino-acid chain; its full sequence is Triosephosphate isomerase (252 aa).

10–12 is a binding site for substrate; sequence NWK. Histidine 96 (electrophile) is an active-site residue. Glutamate 168 functions as the Proton acceptor in the catalytic mechanism. Substrate-binding positions include glycine 174, serine 214, and 235 to 236; that span reads GG.

It belongs to the triosephosphate isomerase family. Homodimer.

The protein resides in the cytoplasm. The enzyme catalyses D-glyceraldehyde 3-phosphate = dihydroxyacetone phosphate. The protein operates within carbohydrate biosynthesis; gluconeogenesis. Its pathway is carbohydrate degradation; glycolysis; D-glyceraldehyde 3-phosphate from glycerone phosphate: step 1/1. In terms of biological role, involved in the gluconeogenesis. Catalyzes stereospecifically the conversion of dihydroxyacetone phosphate (DHAP) to D-glyceraldehyde-3-phosphate (G3P). The sequence is that of Triosephosphate isomerase from Lactobacillus helveticus (strain DPC 4571).